The sequence spans 647 residues: Threonine--tRNA ligase (647 aa).

A TGS domain is found at 1–61 (MINITFPDGA…TEDGSIEIVT (61 aa)). The segment at 242–540 (DHRKLGKELD…LIENYKGAFP (299 aa)) is catalytic. Residues cysteine 336, histidine 387, and histidine 517 each coordinate Zn(2+).

It belongs to the class-II aminoacyl-tRNA synthetase family. In terms of assembly, homodimer. Requires Zn(2+) as cofactor.

It is found in the cytoplasm. It carries out the reaction tRNA(Thr) + L-threonine + ATP = L-threonyl-tRNA(Thr) + AMP + diphosphate + H(+). In terms of biological role, catalyzes the attachment of threonine to tRNA(Thr) in a two-step reaction: L-threonine is first activated by ATP to form Thr-AMP and then transferred to the acceptor end of tRNA(Thr). Also edits incorrectly charged L-seryl-tRNA(Thr). This Streptococcus pneumoniae serotype 4 (strain ATCC BAA-334 / TIGR4) protein is Threonine--tRNA ligase.